Reading from the N-terminus, the 226-residue chain is MSVVSNTSLEHALREGANALGLDLSEAQITQLLDFLALLQKWNKVYNLTAVRDPQEMLTHHLLDSLAAVPPLRRHVARRGQGGAIHLGARLLDVGSGGGLPGVVFAICCPEVDVSCVDTVAKKAAFIQQAAGTLGLSNLHGIHARVETLAGPFDVVSCRAFAALADFTAWSRQALAPHGVWLAMKGKHPHDEIAALPADVSVFHVEQLTVPGLQAERCILWLRPVA.

Residues glycine 95, leucine 100, 146–147, and arginine 159 each bind S-adenosyl-L-methionine; that span reads VE.

The protein belongs to the methyltransferase superfamily. RNA methyltransferase RsmG family.

It is found in the cytoplasm. The enzyme catalyses guanosine(527) in 16S rRNA + S-adenosyl-L-methionine = N(7)-methylguanosine(527) in 16S rRNA + S-adenosyl-L-homocysteine. In terms of biological role, specifically methylates the N7 position of guanine in position 527 of 16S rRNA. The chain is Ribosomal RNA small subunit methyltransferase G from Acidovorax ebreus (strain TPSY) (Diaphorobacter sp. (strain TPSY)).